The primary structure comprises 48 residues: Small, acid-soluble spore protein G (48 aa).

Over residues 1 to 16 (MSENRHENEENRRDAA) the composition is skewed to basic and acidic residues. Positions 1-48 (MSENRHENEENRRDAAVAKVQNSGNAKVVVSVNTDQDQAQAQSQDGED) are disordered. The segment covering 35–48 (DQDQAQAQSQDGED) has biased composition (low complexity).

The sequence is that of Small, acid-soluble spore protein G (sspG) from Bacillus subtilis (strain 168).